Consider the following 213-residue polypeptide: uncharacterized protein (213 aa).

Positions 53, 74, and 97 each coordinate S-adenosyl-L-methionine.

The protein belongs to the methyltransferase superfamily. YrrT family.

Could be a S-adenosyl-L-methionine-dependent methyltransferase. This is an uncharacterized protein from Geobacillus sp. (strain WCH70).